The following is a 128-amino-acid chain: MRHRKSGRHLSRTSSHRKAMFQNMAVSLIEHELIKTTLPKAKELRRVAEPLITLAKEDSVANRRLAFDRTRSKSAVGKLFNDLGKRYATRQGGYLRILKCGFRAGDNAPMAYVELVDRPVGGAVEAAE.

It belongs to the bacterial ribosomal protein bL17 family. As to quaternary structure, part of the 50S ribosomal subunit. Contacts protein L32.

This is Large ribosomal subunit protein bL17 from Pseudomonas entomophila (strain L48).